Consider the following 337-residue polypeptide: Mannan polymerase complex subunit mnn9 (337 aa).

Residues 1–8 (MRVYNKSR) lie on the Cytoplasmic side of the membrane. The chain crosses the membrane as a helical; Signal-anchor for type II membrane protein span at residues 9–29 (IVGQLLFVALGITFIYYLFTP). Topologically, residues 30–337 (SVNSNAKVQI…PYYLVFHHNE (308 aa)) are lumenal.

This sequence belongs to the ANP1/MMN9/VAN1 family.

The protein localises to the endoplasmic reticulum membrane. Its subcellular location is the golgi apparatus membrane. It participates in protein modification; protein glycosylation. In terms of biological role, required for the addition of the long alpha 1,6-mannose backbone of N-linked glycans on cell wall and periplasmic proteins. The sequence is that of Mannan polymerase complex subunit mnn9 from Schizosaccharomyces pombe (strain 972 / ATCC 24843) (Fission yeast).